The following is a 448-amino-acid chain: Asparagine--tRNA ligase (448 aa).

Belongs to the class-II aminoacyl-tRNA synthetase family. As to quaternary structure, homodimer.

It localises to the cytoplasm. The enzyme catalyses tRNA(Asn) + L-asparagine + ATP = L-asparaginyl-tRNA(Asn) + AMP + diphosphate + H(+). The protein is Asparagine--tRNA ligase of Streptococcus thermophilus (strain CNRZ 1066).